Reading from the N-terminus, the 250-residue chain is Malonyl-[acyl-carrier protein] O-methyltransferase (250 aa).

It belongs to the methyltransferase superfamily.

It carries out the reaction malonyl-[ACP] + S-adenosyl-L-methionine = malonyl-[ACP] methyl ester + S-adenosyl-L-homocysteine. Its pathway is cofactor biosynthesis; biotin biosynthesis. Functionally, converts the free carboxyl group of a malonyl-thioester to its methyl ester by transfer of a methyl group from S-adenosyl-L-methionine (SAM). It allows to synthesize pimeloyl-ACP via the fatty acid synthetic pathway. This is Malonyl-[acyl-carrier protein] O-methyltransferase from Neorickettsia risticii (strain Illinois).